Consider the following 421-residue polypeptide: Leucine-rich repeat-containing protein 42 (421 aa).

LRR repeat units lie at residues 149–170 (VLCSLCLRNRYLVVAEKLEEIK), 174–195 (ELTRLDLSCCWLGDEHELLEHL), 202–222 (SVTQLHLKDNCLSDAGIRKMT), 234–255 (NLALLDLSCNPEITDAGIGYLF), and 259–280 (KLNCLDISGTGLKDIKAVKDKL). The tract at residues 376-406 (PLLSQESKKSKKRAFKESEQEQSSPQSAKQK) is disordered. Low complexity predominate over residues 396–406 (EQSSPQSAKQK). S399 bears the Phosphoserine mark.

The protein belongs to the LRRC42 family.

The polypeptide is Leucine-rich repeat-containing protein 42 (Lrrc42) (Mus musculus (Mouse)).